We begin with the raw amino-acid sequence, 545 residues long: Glucose-6-phosphate isomerase (545 aa).

Catalysis depends on E351, which acts as the Proton donor. Active-site residues include H382 and K510.

Belongs to the GPI family.

Its subcellular location is the cytoplasm. The catalysed reaction is alpha-D-glucose 6-phosphate = beta-D-fructose 6-phosphate. It participates in carbohydrate biosynthesis; gluconeogenesis. It functions in the pathway carbohydrate degradation; glycolysis; D-glyceraldehyde 3-phosphate and glycerone phosphate from D-glucose: step 2/4. In terms of biological role, catalyzes the reversible isomerization of glucose-6-phosphate to fructose-6-phosphate. The polypeptide is Glucose-6-phosphate isomerase (Helicobacter pylori (strain G27)).